Reading from the N-terminus, the 237-residue chain is uncharacterized protein (237 aa).

An ATP-binding site is contributed by 50–57; sequence APPGTGKS.

This is an uncharacterized protein from Escherichia coli (strain K12).